The primary structure comprises 379 residues: (R)-2-hydroxyglutaryl-CoA dehydratase, subunit beta (379 aa).

It belongs to the FldB/FldC dehydratase alpha/beta subunit family. As to quaternary structure, the (R)-2-hydroxyglutaryl-CoA dehydratase enzyme system is a heterodimer composed of an alpha subunit (HgdA) and a beta subunit (HgdB). [4Fe-4S] cluster serves as cofactor. FMN is required as a cofactor. It depends on Mg(2+) as a cofactor.

Its subcellular location is the cytoplasm. It catalyses the reaction (R)-2-hydroxyglutaryl-CoA = (2E)-glutaconyl-CoA + H2O. Its pathway is amino-acid degradation; L-glutamate degradation via hydroxyglutarate pathway; crotonoyl-CoA from L-glutamate: step 4/5. Its activity is regulated as follows. Activated by the HgdC. Reversibly inactivated by oxidants such as 2-nitrophenol, 3-nitrophenol, 4-nitrophenol, 4-nitrobenzoate, carbonyl cyanide 4-(trifluoromethoxy)phenylhydrazone (FCCP) and chloramphenicol. Irreversibly inactivated by oxidants such as hydroxylamine and nitrite. Its function is as follows. Involved in the fermentation of L-glutamate via the hydroxyglutarate pathway. Catalyzes the reversible syn-elimination of water from (R)-2-hydroxyglutaryl-CoA to yield (E)-glutaconyl-CoA. The dehydration mechanism involves a transient one electron reduction of the thioester from (R)-2-hydroxyglutaryl-CoA, generating a ketyl radical. Prior to (E)-glutaconyl-CoA formation, the ketyl radical is subsequently reoxidized by electron transfer back to the HgdA-HgdB complex (CompD) to avoid change in oxidation state of the substrate. The appropriate redox state of dehydratase HgdA-HgdB complex (CompD) is maintained by HgdC (CompA) via hydrolysis of ATP and ATP-dependent electron transfer. Since the electron is recycled, the dehydratase is able to perform several turnovers with only catalytic amounts of ATP and substoichiometric amounts of HgdC (CompA). The polypeptide is (R)-2-hydroxyglutaryl-CoA dehydratase, subunit beta (Acidaminococcus fermentans (strain ATCC 25085 / DSM 20731 / CCUG 9996 / CIP 106432 / VR4)).